A 196-amino-acid polypeptide reads, in one-letter code: CMRF35-like molecule 2 (196 aa).

The N-terminal stretch at 1 to 17 is a signal peptide; it reads MRLCAGLLLLCFQGCLS. The 105-residue stretch at 18–122 folds into the Ig-like V-type domain; the sequence is LTGPGSVSGY…DSWSRDPSVS (105 aa). Residues 18-171 are Extracellular-facing; that stretch reads LTGPGSVSGY…QLWSLLSSIQ (154 aa). Cys-36 and Cys-104 form a disulfide bridge. N-linked (GlcNAc...) asparagine glycosylation is present at Asn-84. A helical membrane pass occupies residues 172–192; the sequence is FQVLVFLKLPLFLSMLCAIFW. Topologically, residues 193–196 are cytoplasmic; that stretch reads VNRL.

This sequence belongs to the CD300 family. As to quaternary structure, interacts with TYROBP.

It is found in the cell membrane. Probably acts as an activating receptor. In Mus musculus (Mouse), this protein is CMRF35-like molecule 2 (Cd300e).